The primary structure comprises 212 residues: Neuroendocrine protein 7B2 (212 aa).

The N-terminal stretch at 1 to 26 (MVSRMVSTMLSGLLFWLASGWTPAFA) is a signal peptide. Cysteine 120 and cysteine 130 are joined by a disulfide. Phosphoserine is present on residues serine 141 and serine 205. The segment at 174-212 (GGERRKRRSVNPYLQGQRLDNVVAKKSVPHFSDEDKDPE) is disordered.

This sequence belongs to the 7B2 family. In terms of assembly, interacts with PCSK2/PC2 early in the secretory pathway. Dissociation occurs at later stages. Post-translationally, proteolytically cleaved in the Golgi by a furin-like convertase to generate bioactive peptides. In terms of processing, sulfated on tyrosine residues.

It is found in the secreted. Functionally, acts as a molecular chaperone for PCSK2/PC2, preventing its premature activation in the regulated secretory pathway. Binds to inactive PCSK2 in the endoplasmic reticulum and facilitates its transport from there to later compartments of the secretory pathway where it is proteolytically matured and activated. Also required for cleavage of PCSK2 but does not appear to be involved in its folding. Plays a role in regulating pituitary hormone secretion. The C-terminal peptide inhibits PCSK2 in vitro. The chain is Neuroendocrine protein 7B2 (SCG5) from Homo sapiens (Human).